Reading from the N-terminus, the 220-residue chain is Ribose-5-phosphate isomerase A (220 aa).

Substrate-binding positions include 28-31 (TGST), 81-84 (DGAD), and 94-97 (KGGG). The active-site Proton acceptor is Glu103. Lys121 serves as a coordination point for substrate.

The protein belongs to the ribose 5-phosphate isomerase family. As to quaternary structure, homodimer.

The catalysed reaction is aldehydo-D-ribose 5-phosphate = D-ribulose 5-phosphate. The protein operates within carbohydrate degradation; pentose phosphate pathway; D-ribose 5-phosphate from D-ribulose 5-phosphate (non-oxidative stage): step 1/1. In terms of biological role, catalyzes the reversible conversion of ribose-5-phosphate to ribulose 5-phosphate. This is Ribose-5-phosphate isomerase A from Yersinia enterocolitica serotype O:8 / biotype 1B (strain NCTC 13174 / 8081).